The sequence spans 462 residues: Trigger factor (462 aa).

The 86-residue stretch at 161-246 (GDVVVIDFVG…VKEVRAPKAA (86 aa)) folds into the PPIase FKBP-type domain. The segment covering 428–437 (SVEDLRKDPD) has biased composition (basic and acidic residues). The tract at residues 428-462 (SVEDLRKDPDEASADGEAAPAKPKKKAAAKKKAAE) is disordered. The segment covering 449 to 462 (KPKKKAAAKKKAAE) has biased composition (basic residues).

Belongs to the FKBP-type PPIase family. Tig subfamily.

The protein localises to the cytoplasm. It catalyses the reaction [protein]-peptidylproline (omega=180) = [protein]-peptidylproline (omega=0). Involved in protein export. Acts as a chaperone by maintaining the newly synthesized protein in an open conformation. Functions as a peptidyl-prolyl cis-trans isomerase. This Paramagnetospirillum magneticum (strain ATCC 700264 / AMB-1) (Magnetospirillum magneticum) protein is Trigger factor.